The following is a 537-amino-acid chain: Atrial natriuretic peptide receptor 3 (537 aa).

Residues 1–20 (MPSLLVLTFSACVLLGWALL) form the signal peptide. Residues 21-41 (ADCTGGGGSGGAGPGRGRRER) constitute a propeptide that is removed on maturation. Residues 42-477 (EALPPQKIEV…PCKASGGLEE (436 aa)) lie on the Extracellular side of the membrane. A glycan (N-linked (GlcNAc...) asparagine) is linked at asparagine 82. 2 cysteine pairs are disulfide-bonded: cysteine 104–cysteine 132 and cysteine 209–cysteine 257. N-linked (GlcNAc...) asparagine glycans are attached at residues asparagine 289 and asparagine 390. A helical membrane pass occupies residues 478-500 (SAVTGIVVGALLGAGLLMAFYFF). The Cytoplasmic portion of the chain corresponds to 501–537 (RKKYRITIERRNQQEESNVGKHRELREDSIRSHFSVA).

It belongs to the ANF receptor family. Homodimer; disulfide-linked. Interacts with OSTN.

Its subcellular location is the cell membrane. Receptor for the natriuretic peptide hormones, binding with similar affinities atrial natriuretic peptide NPPA/ANP, brain natriuretic peptide NPPB/BNP, and C-type natriuretic peptide NPPC/CNP. May function as a clearance receptor for NPPA, NPPB and NPPC, regulating their local concentrations and effects. Acts as a regulator of osteoblast differentiation and bone growth by binding to its ligand osteocrin, thereby preventing binding between NPR3/NPR-C and natriuretic peptides, leading to increase cGMP production. The sequence is that of Atrial natriuretic peptide receptor 3 (NPR3) from Bos taurus (Bovine).